Consider the following 202-residue polypeptide: Coiled-coil domain-containing protein 85B (202 aa).

N-acetylmethionine is present on M1. 2 coiled-coil regions span residues 43–90 (GRLM…ERQR) and 118–147 (QKLA…LGEE). The interval 148–202 (WGPRGGPSGAGGSGAGPAPELALPPCGPRDLGDGSSSTGSVGSPDQLPLACSPDD) is disordered. Positions 150 to 162 (PRGGPSGAGGSGA) are enriched in gly residues. The segment covering 180 to 190 (DGSSSTGSVGS) has biased composition (low complexity).

The protein belongs to the CCDC85 family. As to quaternary structure, interacts with CEBPB. Interacts with EURL. May interact with CEBPD. Interacts with MCRS1. Interacts with TCF7L2; competes with CTNNB1. Interacts with ANKRD26. Interacts with the beta-catenin family proteins ARVCF, CTNND1, CTNND2 and PKP4. In terms of assembly, (Microbial infection) Interacts with the viral phosphoprotein hepatitis delta antigen (HDAG); this interaction affects hepatitis delta virus (HDV) genomic replication in intact cells. In terms of tissue distribution, widely expressed including liver.

It is found in the nucleus. The protein resides in the cytoplasm. Its subcellular location is the cytoskeleton. It localises to the microtubule organizing center. The protein localises to the centrosome. It is found in the cell junction. The protein resides in the adherens junction. In terms of biological role, functions as a transcriptional repressor. May inhibit the activity of CTNNB1 in a TP53-dependent manner and thus regulate cell growth. May function in adipocyte differentiation, negatively regulating mitotic clonal expansion. Plays a role in cell-cell adhesion and epithelium development through its interaction with proteins of the beta-catenin family. Functionally, (Microbial infection) Plays a role in hepatitis delta virus (HDV) genomic replication. This Homo sapiens (Human) protein is Coiled-coil domain-containing protein 85B (CCDC85B).